A 142-amino-acid chain; its full sequence is Ribonuclease VapC31 (142 aa).

The 137-residue stretch at 3-139 folds into the PINc domain; the sequence is LLDANVLLAA…ARFASVRHIR (137 aa). Asp5 and Asp108 together coordinate Mg(2+).

Belongs to the PINc/VapC protein family. Mg(2+) serves as cofactor.

Functionally, toxic component of a type II toxin-antitoxin (TA) system. An RNase. Its toxic effect is neutralized by coexpression with cognate antitoxin VapB31. In Mycobacterium tuberculosis (strain CDC 1551 / Oshkosh), this protein is Ribonuclease VapC31.